A 102-amino-acid polypeptide reads, in one-letter code: Small ribosomal subunit protein uS10 (102 aa).

Belongs to the universal ribosomal protein uS10 family. In terms of assembly, part of the 30S ribosomal subunit.

In terms of biological role, involved in the binding of tRNA to the ribosomes. The polypeptide is Small ribosomal subunit protein uS10 (Levilactobacillus brevis (strain ATCC 367 / BCRC 12310 / CIP 105137 / JCM 1170 / LMG 11437 / NCIMB 947 / NCTC 947) (Lactobacillus brevis)).